A 253-amino-acid polypeptide reads, in one-letter code: Probable transcriptional regulatory protein RBE_0568 (253 aa).

Residues 1–21 are disordered; it reads MAGHSKFKNIQHRKGAQDKKR.

This sequence belongs to the TACO1 family.

It localises to the cytoplasm. In Rickettsia bellii (strain RML369-C), this protein is Probable transcriptional regulatory protein RBE_0568.